The following is a 180-amino-acid chain: UPF0227 protein Ent638_1623 (180 aa).

This sequence belongs to the UPF0227 family.

The chain is UPF0227 protein Ent638_1623 from Enterobacter sp. (strain 638).